The following is an 81-amino-acid chain: Insect-toxin Cn10 (81 aa).

An N-terminal signal peptide occupies residues 1 to 13 (ITACLVLIGTVCA). In terms of domain architecture, LCN-type CS-alpha/beta spans 14–79 (KEGYLVNKST…TYPIPGKTCR (66 aa)). Cystine bridges form between Cys-25/Cys-78, Cys-29/Cys-54, Cys-38/Cys-59, and Cys-42/Cys-61. A propeptide (removed by a carboxypeptidase) is located at residue Lys-81.

The protein belongs to the long (4 C-C) scorpion toxin superfamily. Sodium channel inhibitor family. Beta subfamily. As to expression, expressed by the venom gland.

The protein resides in the secreted. Functionally, beta toxins bind voltage-independently at site-4 of sodium channels (Nav) and shift the voltage of activation toward more negative potentials thereby affecting sodium channel activation and promoting spontaneous and repetitive firing. Is toxic on insects and crustaceans, but not on mammals. The chain is Insect-toxin Cn10 from Centruroides noxius (Mexican scorpion).